Here is a 494-residue protein sequence, read N- to C-terminus: Guanosine-5'-triphosphate,3'-diphosphate pyrophosphatase (494 aa).

It belongs to the GppA/Ppx family. GppA subfamily.

It carries out the reaction guanosine 3'-diphosphate 5'-triphosphate + H2O = guanosine 3',5'-bis(diphosphate) + phosphate + H(+). It functions in the pathway purine metabolism; ppGpp biosynthesis; ppGpp from GTP: step 2/2. Functionally, catalyzes the conversion of pppGpp to ppGpp. Guanosine pentaphosphate (pppGpp) is a cytoplasmic signaling molecule which together with ppGpp controls the 'stringent response', an adaptive process that allows bacteria to respond to amino acid starvation, resulting in the coordinated regulation of numerous cellular activities. The chain is Guanosine-5'-triphosphate,3'-diphosphate pyrophosphatase from Shigella dysenteriae serotype 1 (strain Sd197).